Here is a 160-residue protein sequence, read N- to C-terminus: Protein MGF 300-2R (160 aa).

The protein belongs to the asfivirus MGF 300 family.

Plays a role in virus cell tropism, and may be required for efficient virus replication in macrophages. This chain is Protein MGF 300-2R, found in African swine fever virus (isolate Tick/Malawi/Lil 20-1/1983) (ASFV).